We begin with the raw amino-acid sequence, 533 residues long: D-3-phosphoglycerate dehydrogenase (533 aa).

Ala-2 is modified (N-acetylalanine). Ser-14 carries the phosphoserine modification. Lys-21 bears the N6-acetyllysine; alternate mark. Lys-21 is covalently cross-linked (Glycyl lysine isopeptide (Lys-Gly) (interchain with G-Cter in SUMO1); alternate). Lys-21 is covalently cross-linked (Glycyl lysine isopeptide (Lys-Gly) (interchain with G-Cter in SUMO2); alternate). Lys-58 is modified (N6-acetyllysine). NAD(+) is bound by residues Thr-78, 155–156 (RI), Asp-175, Thr-207, 234–236 (CAR), and Asp-260. Thr-78 bears the Phosphothreonine mark. Arg-236 is an active-site residue. The active site involves Glu-265. His-283 (proton donor) is an active-site residue. 283–286 (HLGA) contributes to the NAD(+) binding site.

It belongs to the D-isomer specific 2-hydroxyacid dehydrogenase family. Homotetramer.

The enzyme catalyses (2R)-3-phosphoglycerate + NAD(+) = 3-phosphooxypyruvate + NADH + H(+). It carries out the reaction (R)-2-hydroxyglutarate + NAD(+) = 2-oxoglutarate + NADH + H(+). It catalyses the reaction (S)-malate + NAD(+) = oxaloacetate + NADH + H(+). It participates in amino-acid biosynthesis; L-serine biosynthesis; L-serine from 3-phospho-D-glycerate: step 1/3. Functionally, catalyzes the reversible oxidation of 3-phospho-D-glycerate to 3-phosphonooxypyruvate, the first step of the phosphorylated L-serine biosynthesis pathway. Also catalyzes the reversible oxidation of 2-hydroxyglutarate to 2-oxoglutarate and the reversible oxidation of (S)-malate to oxaloacetate. The protein is D-3-phosphoglycerate dehydrogenase (PHGDH) of Pan troglodytes (Chimpanzee).